We begin with the raw amino-acid sequence, 498 residues long: NAD(P)H-quinone oxidoreductase chain 4, chloroplastic (498 aa).

Helical transmembrane passes span 4–24 (FPWL…IVLF), 37–57 (YCIC…HFEL), 80–100 (FGID…TTLA), 112–129 (KLFY…LGTF), 134–154 (ILLF…LLSM), 167–187 (FILY…GMSL), 208–228 (ALEI…SPII), 242–262 (HYST…YGLV), 272–292 (AHSI…IYAA), 305–325 (IAYS…SISE), 330–350 (GAIL…FLAG), 386–406 (LALP…GIIT), 416–436 (ILIT…SLSI), and 463–483 (FISI…DFIF).

It belongs to the complex I subunit 4 family.

Its subcellular location is the plastid. It is found in the chloroplast thylakoid membrane. The catalysed reaction is a plastoquinone + NADH + (n+1) H(+)(in) = a plastoquinol + NAD(+) + n H(+)(out). It carries out the reaction a plastoquinone + NADPH + (n+1) H(+)(in) = a plastoquinol + NADP(+) + n H(+)(out). In Phaseolus vulgaris (Kidney bean), this protein is NAD(P)H-quinone oxidoreductase chain 4, chloroplastic.